We begin with the raw amino-acid sequence, 142 residues long: Hemoglobin subunit zeta (142 aa).

N-acetylserine is present on Ser2. Positions 2–142 constitute a Globin domain; it reads SLTKTEGTII…VSSVLTEKYR (141 aa). At Thr29 the chain carries Phosphothreonine. Phosphoserine is present on Ser53. His59 serves as a coordination point for heme b. Ser73 and Ser82 each carry phosphoserine. His88 is a heme b binding site.

This sequence belongs to the globin family. In terms of assembly, heterotetramer of two zeta chains and beta-type chains.

Its function is as follows. The zeta chain is an alpha-type chain of mammalian embryonic hemoglobin. The chain is Hemoglobin subunit zeta (HBZ1) from Pan troglodytes (Chimpanzee).